The primary structure comprises 471 residues: UDP-N-acetylmuramoylalanine--D-glutamate ligase (471 aa).

Position 122–128 (122–128 (GTNGKTT)) interacts with ATP.

Belongs to the MurCDEF family.

Its subcellular location is the cytoplasm. The enzyme catalyses UDP-N-acetyl-alpha-D-muramoyl-L-alanine + D-glutamate + ATP = UDP-N-acetyl-alpha-D-muramoyl-L-alanyl-D-glutamate + ADP + phosphate + H(+). The protein operates within cell wall biogenesis; peptidoglycan biosynthesis. Its function is as follows. Cell wall formation. Catalyzes the addition of glutamate to the nucleotide precursor UDP-N-acetylmuramoyl-L-alanine (UMA). The sequence is that of UDP-N-acetylmuramoylalanine--D-glutamate ligase from Streptomyces coelicolor (strain ATCC BAA-471 / A3(2) / M145).